Here is a 639-residue protein sequence, read N- to C-terminus: uncharacterized protein (639 aa).

Residues M1–A16 form the signal peptide. Disordered regions lie at residues R80–L128 and Q432–T488. Polar residues-rich tracts occupy residues T108–P122 and Q432–P446. Basic and acidic residues predominate over residues H465–H480.

This is an uncharacterized protein from Human cytomegalovirus (strain Merlin) (HHV-5).